The chain runs to 383 residues: S-adenosylmethionine synthase (383 aa).

His16 is an ATP binding site. Mg(2+) is bound at residue Asp18. Glu44 provides a ligand contact to K(+). L-methionine-binding residues include Glu57 and Gln98. Positions 98–108 (QSPDIAMGVDI) are flexible loop. Residues 158 to 160 (DQK), 226 to 227 (RF), Asp235, 241 to 242 (RK), Ala258, and Lys262 each bind ATP. Asp235 contributes to the L-methionine binding site. An L-methionine-binding site is contributed by Lys266.

The protein belongs to the AdoMet synthase family. In terms of assembly, homotetramer; dimer of dimers. The cofactor is Mg(2+). It depends on K(+) as a cofactor.

The protein localises to the cytoplasm. The catalysed reaction is L-methionine + ATP + H2O = S-adenosyl-L-methionine + phosphate + diphosphate. It functions in the pathway amino-acid biosynthesis; S-adenosyl-L-methionine biosynthesis; S-adenosyl-L-methionine from L-methionine: step 1/1. Functionally, catalyzes the formation of S-adenosylmethionine (AdoMet) from methionine and ATP. The overall synthetic reaction is composed of two sequential steps, AdoMet formation and the subsequent tripolyphosphate hydrolysis which occurs prior to release of AdoMet from the enzyme. In Fusobacterium nucleatum subsp. nucleatum (strain ATCC 25586 / DSM 15643 / BCRC 10681 / CIP 101130 / JCM 8532 / KCTC 2640 / LMG 13131 / VPI 4355), this protein is S-adenosylmethionine synthase.